We begin with the raw amino-acid sequence, 400 residues long: tRNA(Ile)-lysidine synthase (400 aa).

20–25 (SGGLDS) contacts ATP.

The protein belongs to the tRNA(Ile)-lysidine synthase family.

The protein localises to the cytoplasm. It carries out the reaction cytidine(34) in tRNA(Ile2) + L-lysine + ATP = lysidine(34) in tRNA(Ile2) + AMP + diphosphate + H(+). In terms of biological role, ligates lysine onto the cytidine present at position 34 of the AUA codon-specific tRNA(Ile) that contains the anticodon CAU, in an ATP-dependent manner. Cytidine is converted to lysidine, thus changing the amino acid specificity of the tRNA from methionine to isoleucine. The chain is tRNA(Ile)-lysidine synthase from Wigglesworthia glossinidia brevipalpis.